The following is a 128-amino-acid chain: Large ribosomal subunit protein mL55 (128 aa).

The transit peptide at 1 to 33 (MAAVGSLLGRLRQSTVKATGPALRRLHTSSWRA) directs the protein to the mitochondrion. At Ser-85 the chain carries Phosphoserine.

It belongs to the mitochondrion-specific ribosomal protein mL55 family. As to quaternary structure, component of the mitochondrial large ribosomal subunit (mt-LSU). Mature mammalian 55S mitochondrial ribosomes consist of a small (28S) and a large (39S) subunit. The 28S small subunit contains a 12S ribosomal RNA (12S mt-rRNA) and 30 different proteins. The 39S large subunit contains a 16S rRNA (16S mt-rRNA), a copy of mitochondrial valine transfer RNA (mt-tRNA(Val)), which plays an integral structural role, and 52 different proteins.

Its subcellular location is the mitochondrion. The polypeptide is Large ribosomal subunit protein mL55 (MRPL55) (Homo sapiens (Human)).